A 165-amino-acid polypeptide reads, in one-letter code: Phosphopantetheine adenylyltransferase (165 aa).

S10 provides a ligand contact to substrate. Residues 10–11 (SF) and H18 each bind ATP. 3 residues coordinate substrate: K42, L74, and R88. Residues 89–91 (GLR), E99, and 124–130 (YSYLSSS) contribute to the ATP site.

It belongs to the bacterial CoaD family. Homohexamer. The cofactor is Mg(2+).

It localises to the cytoplasm. The enzyme catalyses (R)-4'-phosphopantetheine + ATP + H(+) = 3'-dephospho-CoA + diphosphate. Its pathway is cofactor biosynthesis; coenzyme A biosynthesis; CoA from (R)-pantothenate: step 4/5. Its function is as follows. Reversibly transfers an adenylyl group from ATP to 4'-phosphopantetheine, yielding dephospho-CoA (dPCoA) and pyrophosphate. This is Phosphopantetheine adenylyltransferase from Halalkalibacterium halodurans (strain ATCC BAA-125 / DSM 18197 / FERM 7344 / JCM 9153 / C-125) (Bacillus halodurans).